A 189-amino-acid chain; its full sequence is Crossover junction endodeoxyribonuclease RuvC (189 aa).

Catalysis depends on residues D11, E71, and D143. Mg(2+) contacts are provided by D11, E71, and D143.

Belongs to the RuvC family. Homodimer which binds Holliday junction (HJ) DNA. The HJ becomes 2-fold symmetrical on binding to RuvC with unstacked arms; it has a different conformation from HJ DNA in complex with RuvA. In the full resolvosome a probable DNA-RuvA(4)-RuvB(12)-RuvC(2) complex forms which resolves the HJ. Mg(2+) is required as a cofactor.

It localises to the cytoplasm. It carries out the reaction Endonucleolytic cleavage at a junction such as a reciprocal single-stranded crossover between two homologous DNA duplexes (Holliday junction).. In terms of biological role, the RuvA-RuvB-RuvC complex processes Holliday junction (HJ) DNA during genetic recombination and DNA repair. Endonuclease that resolves HJ intermediates. Cleaves cruciform DNA by making single-stranded nicks across the HJ at symmetrical positions within the homologous arms, yielding a 5'-phosphate and a 3'-hydroxyl group; requires a central core of homology in the junction. The consensus cleavage sequence is 5'-(A/T)TT(C/G)-3'. Cleavage occurs on the 3'-side of the TT dinucleotide at the point of strand exchange. HJ branch migration catalyzed by RuvA-RuvB allows RuvC to scan DNA until it finds its consensus sequence, where it cleaves and resolves the cruciform DNA. This chain is Crossover junction endodeoxyribonuclease RuvC, found in Methylorubrum extorquens (strain CM4 / NCIMB 13688) (Methylobacterium extorquens).